The following is a 511-amino-acid chain: Glucans biosynthesis protein G (511 aa).

The N-terminal stretch at 1–22 (MMKMRWLSAAVMLTLYTSSSWA) is a signal peptide.

The protein belongs to the OpgD/OpgG family.

The protein resides in the periplasm. The protein operates within glycan metabolism; osmoregulated periplasmic glucan (OPG) biosynthesis. In terms of biological role, involved in the biosynthesis of osmoregulated periplasmic glucans (OPGs). In Escherichia coli O81 (strain ED1a), this protein is Glucans biosynthesis protein G.